A 400-amino-acid polypeptide reads, in one-letter code: Acetylornithine aminotransferase (400 aa).

Pyridoxal 5'-phosphate contacts are provided by residues G106–A107 and F132. R135 lines the N(2)-acetyl-L-ornithine pocket. D217 to Q220 contributes to the pyridoxal 5'-phosphate binding site. At K246 the chain carries N6-(pyridoxal phosphate)lysine. Residue S274 coordinates N(2)-acetyl-L-ornithine. T275 is a binding site for pyridoxal 5'-phosphate.

This sequence belongs to the class-III pyridoxal-phosphate-dependent aminotransferase family. ArgD subfamily. Homodimer. Pyridoxal 5'-phosphate is required as a cofactor.

The protein resides in the cytoplasm. It carries out the reaction N(2)-acetyl-L-ornithine + 2-oxoglutarate = N-acetyl-L-glutamate 5-semialdehyde + L-glutamate. It functions in the pathway amino-acid biosynthesis; L-arginine biosynthesis; N(2)-acetyl-L-ornithine from L-glutamate: step 4/4. This Streptomyces clavuligerus protein is Acetylornithine aminotransferase.